The sequence spans 154 residues: Myoglobin (154 aa).

One can recognise a Globin domain in the interval 2–148 (GLSDGEWQLV…FRNDIAAKYK (147 aa)). S4 is subject to Phosphoserine. H65 provides a ligand contact to nitrite. Residue H65 participates in O2 binding. T68 bears the Phosphothreonine mark. H94 is a heme b binding site.

The protein belongs to the globin family. In terms of assembly, monomeric.

It is found in the cytoplasm. The protein localises to the sarcoplasm. The catalysed reaction is Fe(III)-heme b-[protein] + nitric oxide + H2O = Fe(II)-heme b-[protein] + nitrite + 2 H(+). It carries out the reaction H2O2 + AH2 = A + 2 H2O. In terms of biological role, monomeric heme protein which primary function is to store oxygen and facilitate its diffusion within muscle tissues. Reversibly binds oxygen through a pentacoordinated heme iron and enables its timely and efficient release as needed during periods of heightened demand. Depending on the oxidative conditions of tissues and cells, and in addition to its ability to bind oxygen, it also has a nitrite reductase activity whereby it regulates the production of bioactive nitric oxide. Under stress conditions, like hypoxia and anoxia, it also protects cells against reactive oxygen species thanks to its pseudoperoxidase activity. The protein is Myoglobin (MB) of Erinaceus europaeus (Western European hedgehog).